Here is an 861-residue protein sequence, read N- to C-terminus: Nuclear cap-binding protein complex subunit 1 (861 aa).

Residues 22–30 carry the Nuclear localization signal motif; sequence RMPKRQRIP. Residues 36 to 264 form the MIF4G domain; that stretch reads CKEMMPDIRT…LVRVVLPNVK (229 aa).

This sequence belongs to the NCBP1 family. Component of the nuclear cap-binding complex (CBC), a heterodimer composed of STO1/CBC1 and CBC2 that interacts with capped RNAs. The complex interacts strongly with the importin subunit alpha SRP1. The SRP1-CBC trimer also binds to capped RNAs, but formation of the importin alpha/beta heterodimer upon binding of KAP95 to SRP1 in the cytoplasm causes dissociation of CBC from the RNA. The CBC complex is part of the commitment complex 1 (CC1), binding to the cap of pre-mRNA and interacting with U1 snRNP subunits MUD2 and SNU56. The CBC complex is part of the NRD1 complex, composed of CBC2, NAB1, NRD1, SEN1 and STO1/CBC2. The CBC complex also interacts with NPL3 and eIF4G (TIF4631 and TIF4632).

Its subcellular location is the nucleus. The protein resides in the cytoplasm. It localises to the perinuclear region. Functionally, component of the CBC complex, which binds co-transcriptionally to the 5'-cap of pre-mRNAs and is involved in maturation, export and degradation of nuclear mRNAs. The CBC complex is required for efficient pre-mRNA splicing through efficient commitment complex and spliceosome formation. Together with NPL3, the CBC complex is required for export of mRNAs out of the nucleus. The CBC complex is also involved in nuclear mRNA degradation, probably by directing the mRNAs to the sites of degradation. Affects replication of the positive-strand RNA virus BMV. The chain is Nuclear cap-binding protein complex subunit 1 (STO1) from Saccharomyces cerevisiae (strain ATCC 204508 / S288c) (Baker's yeast).